Reading from the N-terminus, the 297-residue chain is 6-dehydroglucose reductase (297 aa).

3 residues coordinate NADP(+): Trp-20, Arg-21, and Asp-49. The active-site Proton donor is the Tyr-54. The D-glucose site is built by Tyr-54, Lys-98, His-129, and Arg-130. NADP(+)-binding residues include Ser-159, Asn-160, Gln-181, Ser-211, Leu-213, Gly-215, Gly-261, Thr-262, Asn-263, and Arg-267.

The protein belongs to the aldo/keto reductase family. In terms of assembly, homotrimer.

The catalysed reaction is D-glucose + NADP(+) = 6-dehydro-D-glucose + NADPH + H(+). Its function is as follows. Part of the sulfoquinovose monooxygenase (sulfo-SMO) pathway, a D-sulfoquinovose degradation pathway that enables the complete utilization of all carbons within sulfoquinovose (SQ) with concomitant production of inorganic sulfite. Catalyzes the NADP-dependent reduction of 6-dehydro-D-glucose to D-glucose. Cannot use NADH. This is 6-dehydroglucose reductase from Agrobacterium fabrum (strain C58 / ATCC 33970) (Agrobacterium tumefaciens (strain C58)).